Reading from the N-terminus, the 152-residue chain is MTITDLVLILFIAALLAFAIYDQFIMPRRNGPTLLAIPLLRRGRIDSVIFVGLIVILIYNNVTNHGALITTWLLSALALMGFYIFWIRVPKIIFKQKGFFFANVWIEYSRIKAMNLSEDGVLVMQLEQRRLLIRVRNIDDLERIYKLLVSTQ.

Helical transmembrane passes span 6–26, 45–65, and 67–87; these read LVLILFIAALLAFAIYDQFIM, IDSVIFVGLIVILIYNNVTNH, and ALITTWLLSALALMGFYIFWI.

It belongs to the UPF0266 family.

Its subcellular location is the cell inner membrane. In Escherichia coli O157:H7 (strain EC4115 / EHEC), this protein is UPF0266 membrane protein YobD.